Here is a 188-residue protein sequence, read N- to C-terminus: MNISATILLAFGMSMDAFAASIGKGATLHKPKFSEALRTGLIFGAIETLTPLIGWSLGMLASQFILEWNHWIAFTLLVFLGGRMVIEGFRNTPDEDDAPQYRHGFWILVTTAIATSLDAMAVGVGLAFLQVNIIATALAIGCATLIMSTIGMMVGRFIGPLLGKRAEILGGIVLIGIGGQILWSHFAG.

6 helical membrane-spanning segments follow: residues 3 to 23, 41 to 61, 62 to 82, 106 to 128, 143 to 163, and 168 to 188; these read ISAT…ASIG, LIFG…GMLA, SQFI…FLGG, WILV…GLAF, ATLI…PLLG, and ILGG…HFAG.

This sequence belongs to the MntP (TC 9.B.29) family.

It is found in the cell inner membrane. Its function is as follows. Probably functions as a manganese efflux pump. This chain is Putative manganese efflux pump MntP, found in Enterobacter sp. (strain 638).